The primary structure comprises 315 residues: Ornithine carbamoyltransferase (315 aa).

Carbamoyl phosphate-binding positions include 53-56, Gln80, Arg104, and 131-134; these read STRT and HPCQ. Residues Asn163, Asp227, and 231–232 each bind L-ornithine; that span reads SM. Residues 267–268 and Arg295 contribute to the carbamoyl phosphate site; that span reads CL.

This sequence belongs to the aspartate/ornithine carbamoyltransferase superfamily. OTCase family.

The protein resides in the cytoplasm. It catalyses the reaction carbamoyl phosphate + L-ornithine = L-citrulline + phosphate + H(+). Its pathway is amino-acid biosynthesis; L-arginine biosynthesis; L-arginine from L-ornithine and carbamoyl phosphate: step 1/3. In terms of biological role, reversibly catalyzes the transfer of the carbamoyl group from carbamoyl phosphate (CP) to the N(epsilon) atom of ornithine (ORN) to produce L-citrulline. This is Ornithine carbamoyltransferase from Rhodococcus jostii (strain RHA1).